The sequence spans 552 residues: Non-structural protein NS1 (552 aa).

Belongs to the orbivirus non-structural protein NS1 family.

In Antilocapra americana (Pronghorn), this protein is Non-structural protein NS1 (Segment-5).